Reading from the N-terminus, the 299-residue chain is Sulfotransferase 1B1 (299 aa).

48 to 53 provides a ligand contact to 3'-phosphoadenylyl sulfate; it reads KSGTTW. 107-109 provides a ligand contact to substrate; the sequence is KTH. His-109 functions as the Proton acceptor in the catalytic mechanism. 3'-phosphoadenylyl sulfate-binding positions include Arg-131, Ser-139, Tyr-194, 228-233, and 258-260; these read TSFEMM and RKG.

The protein belongs to the sulfotransferase 1 family. In terms of tissue distribution, liver specific.

The protein localises to the cytoplasm. The catalysed reaction is a phenol + 3'-phosphoadenylyl sulfate = an aryl sulfate + adenosine 3',5'-bisphosphate + H(+). It carries out the reaction 3,3',5-triiodo-L-thyronine + 3'-phosphoadenylyl sulfate = 3,3',5-triiodo-L-thyronine sulfate + adenosine 3',5'-bisphosphate + H(+). It catalyses the reaction 3,3',5'-triiodo-L-thyronine + 3'-phosphoadenylyl sulfate = 3,3',5'-triiodo-L-thyronine sulfate + adenosine 3',5'-bisphosphate + H(+). The enzyme catalyses 3,3'-diiodo-L-thyronine + 3'-phosphoadenylyl sulfate = 3,3'-diiodo-L-thyronine sulfate + adenosine 3',5'-bisphosphate + H(+). The catalysed reaction is dopamine + 3'-phosphoadenylyl sulfate = dopamine 3-O-sulfate + adenosine 3',5'-bisphosphate + H(+). It carries out the reaction dopamine + 3'-phosphoadenylyl sulfate = dopamine 4-O-sulfate + adenosine 3',5'-bisphosphate + H(+). It catalyses the reaction 4-ethylphenol + 3'-phosphoadenylyl sulfate = 4-ethylphenyl sulfate + adenosine 3',5'-bisphosphate + H(+). Sulfotransferase that utilizes 3'-phospho-5'-adenylyl sulfate (PAPS) as sulfonate donor to catalyze the sulfate conjugation of dopamine, small phenols such as 1-naphthol and p-nitrophenol and thyroid hormones, including 3,3'-diiodothyronine, triidothyronine (T3) and reverse triiodothyronine (rT3). May play a role in gut microbiota-host metabolic interaction. O-sulfonates 4-ethylphenol (4-EP), a dietary tyrosine-derived metabolite produced by gut bacteria. The product 4-EPS crosses the blood-brain barrier and may negatively regulate oligodendrocyte maturation and myelination, affecting the functional connectivity of different brain regions associated with the limbic system. The sequence is that of Sulfotransferase 1B1 from Mus musculus (Mouse).